The sequence spans 432 residues: Lipid-A-disaccharide synthase (432 aa).

Over residues 1–11 (MTGIGNQTSGI) the composition is skewed to polar residues. A disordered region spans residues 1–35 (MTGIGNQTSGIETGVHDRAPADGEPTALPISHSPL).

This sequence belongs to the LpxB family.

The enzyme catalyses a lipid X + a UDP-2-N,3-O-bis[(3R)-3-hydroxyacyl]-alpha-D-glucosamine = a lipid A disaccharide + UDP + H(+). It functions in the pathway bacterial outer membrane biogenesis; LPS lipid A biosynthesis. In terms of biological role, condensation of UDP-2,3-diacylglucosamine and 2,3-diacylglucosamine-1-phosphate to form lipid A disaccharide, a precursor of lipid A, a phosphorylated glycolipid that anchors the lipopolysaccharide to the outer membrane of the cell. This is Lipid-A-disaccharide synthase from Xanthomonas oryzae pv. oryzae (strain MAFF 311018).